The primary structure comprises 243 residues: Leucyl/phenylalanyl-tRNA--protein transferase (243 aa).

The protein belongs to the L/F-transferase family.

It localises to the cytoplasm. The catalysed reaction is N-terminal L-lysyl-[protein] + L-leucyl-tRNA(Leu) = N-terminal L-leucyl-L-lysyl-[protein] + tRNA(Leu) + H(+). The enzyme catalyses N-terminal L-arginyl-[protein] + L-leucyl-tRNA(Leu) = N-terminal L-leucyl-L-arginyl-[protein] + tRNA(Leu) + H(+). It catalyses the reaction L-phenylalanyl-tRNA(Phe) + an N-terminal L-alpha-aminoacyl-[protein] = an N-terminal L-phenylalanyl-L-alpha-aminoacyl-[protein] + tRNA(Phe). Functionally, functions in the N-end rule pathway of protein degradation where it conjugates Leu, Phe and, less efficiently, Met from aminoacyl-tRNAs to the N-termini of proteins containing an N-terminal arginine or lysine. This Xylella fastidiosa (strain 9a5c) protein is Leucyl/phenylalanyl-tRNA--protein transferase.